The sequence spans 89 residues: Small ribosomal subunit protein uS15 (89 aa).

A compositionally biased stretch (basic and acidic residues) spans 1-21 (MAISQERKNEIIKEYARHEGD). Residues 1–24 (MAISQERKNEIIKEYARHEGDTGS) are disordered.

The protein belongs to the universal ribosomal protein uS15 family. In terms of assembly, part of the 30S ribosomal subunit. Forms a bridge to the 50S subunit in the 70S ribosome, contacting the 23S rRNA.

In terms of biological role, one of the primary rRNA binding proteins, it binds directly to 16S rRNA where it helps nucleate assembly of the platform of the 30S subunit by binding and bridging several RNA helices of the 16S rRNA. Its function is as follows. Forms an intersubunit bridge (bridge B4) with the 23S rRNA of the 50S subunit in the ribosome. This is Small ribosomal subunit protein uS15 from Enterococcus faecalis (strain ATCC 700802 / V583).